Consider the following 538-residue polypeptide: UNC93-like protein (538 aa).

Asn-45 carries an N-linked (GlcNAc...) asparagine glycan. The next 5 helical transmembrane spans lie at 46 to 66 (ISII…TANL), 80 to 100 (SLSA…TLII), 105 to 125 (VKWT…FQLF), 128 to 148 (FYTL…MWAS), and 170 to 190 (AIIV…ELWG). Asn-210 is a glycosylation site (N-linked (GlcNAc...) asparagine). A run of 7 helical transmembrane segments spans residues 244 to 264 (IFEI…IIAF), 305 to 325 (LLIP…ADFT), 338 to 358 (IGFV…LFGS), 366 to 386 (TPII…ELFW), 394 to 414 (IIFY…QTQI), 435 to 455 (LWES…CTQM), and 457 to 477 (LYIL…VEIL).

Belongs to the unc-93 family.

It is found in the membrane. In Drosophila melanogaster (Fruit fly), this protein is UNC93-like protein.